Consider the following 645-residue polypeptide: Glucans biosynthesis glucosyltransferase H (645 aa).

Positions 1-13 are enriched in polar residues; sequence MDGTVTPSPTTTA. Residues 1-32 form a disordered region; that stretch reads MDGTVTPSPTTTAMPPVSALDAGTPTLPPEAP. A run of 7 helical transmembrane segments spans residues 64-84, 98-118, 423-443, 465-485, 504-524, 559-579, and 580-600; these read LIGGTFATTAIAVWVMLSVLW, LFVLLFAWIAMSFASAVAGFV, APMWGLLMLIGIGIPLAGGGI, AIWIFICTMFVLLAPKLLGYI, AVSILLETVLAALMAPVVMYL, YGGLTVFGLFMGAVAYAVSPA, and LAAWMGPVIVGMALSIPVVAL.

It belongs to the glycosyltransferase 2 family. OpgH subfamily.

The protein resides in the cell inner membrane. It participates in glycan metabolism; osmoregulated periplasmic glucan (OPG) biosynthesis. Its function is as follows. Involved in the biosynthesis of osmoregulated periplasmic glucans (OPGs). The chain is Glucans biosynthesis glucosyltransferase H from Xanthomonas euvesicatoria pv. vesicatoria (strain 85-10) (Xanthomonas campestris pv. vesicatoria).